Consider the following 270-residue polypeptide: tRNA pseudouridine synthase A (270 aa).

The active-site Nucleophile is the Asp-60. Positions Phe-107–Phe-111 are RNA binding. Tyr-118 provides a ligand contact to substrate. An interaction with tRNA region spans residues Gln-168 to Arg-172.

Belongs to the tRNA pseudouridine synthase TruA family. In terms of assembly, homodimer.

The enzyme catalyses uridine(38/39/40) in tRNA = pseudouridine(38/39/40) in tRNA. Functionally, formation of pseudouridine at positions 38, 39 and 40 in the anticodon stem and loop of transfer RNAs. The sequence is that of tRNA pseudouridine synthase A from Enterobacter sp. (strain 638).